A 417-amino-acid chain; its full sequence is Phosphoglycerate kinase, cytosolic (417 aa).

(2R)-3-phosphoglycerate is bound by residues Val23, Asp24, Phe25, Asn26, Arg39, Ser61, His62, Gly64, Arg65, Arg132, His168, and Arg169. ADP contacts are provided by Gly214 and Ala215. Position 214 (Gly214) interacts with CDP. Positions 215 and 216 each coordinate AMP. Ala215 serves as a coordination point for ATP. Position 215 (Ala215) interacts with Mg(2+). Lys216 provides a ligand contact to (2R)-3-phosphoglycerate. Residue Asp219 coordinates CDP. Asp219 provides a ligand contact to Mg(2+). Residues Lys220 and Gly238 each coordinate ADP. AMP is bound at residue Lys220. Residue Lys220 coordinates ATP. Gly238 is a binding site for CDP. 2 residues coordinate AMP: Ala239 and Ala311. The ATP site is built by Ala239 and Ala311. Residues Ala311 and Asn335 each contribute to the ADP site. CDP-binding residues include Gly336 and Phe341. Phe341, Glu342, Asp374, and Thr375 together coordinate ADP. Glu342 contacts AMP. Positions 342, 374, and 375 each coordinate ATP. Asp374 is a binding site for Mg(2+).

Belongs to the phosphoglycerate kinase family. In terms of assembly, monomer. The cofactor is Mg(2+).

It localises to the cytoplasm. It catalyses the reaction (2R)-3-phosphoglycerate + ATP = (2R)-3-phospho-glyceroyl phosphate + ADP. The protein operates within carbohydrate degradation; glycolysis; pyruvate from D-glyceraldehyde 3-phosphate: step 2/5. The sequence is that of Phosphoglycerate kinase, cytosolic (PGKB) from Leishmania mexicana.